Consider the following 1411-residue polypeptide: DNA-directed RNA polymerase subunit beta' (1411 aa).

Residues C70, C72, C85, and C88 each contribute to the Zn(2+) site. The Mg(2+) site is built by D460, D462, and D464. C814, C889, C896, and C899 together coordinate Zn(2+). A compositionally biased stretch (polar residues) spans 1387–1399; that stretch reads RSTSSGTEITSPS. A disordered region spans residues 1387 to 1411; it reads RSTSSGTEITSPSKDAIPLGSKVGF.

The protein belongs to the RNA polymerase beta' chain family. In terms of assembly, the RNAP catalytic core consists of 2 alpha, 1 beta, 1 beta' and 1 omega subunit. When a sigma factor is associated with the core the holoenzyme is formed, which can initiate transcription. The cofactor is Mg(2+). Zn(2+) serves as cofactor.

The enzyme catalyses RNA(n) + a ribonucleoside 5'-triphosphate = RNA(n+1) + diphosphate. DNA-dependent RNA polymerase catalyzes the transcription of DNA into RNA using the four ribonucleoside triphosphates as substrates. In Xylella fastidiosa (strain M12), this protein is DNA-directed RNA polymerase subunit beta'.